The primary structure comprises 408 residues: CinA-like protein (408 aa).

The protein belongs to the CinA family.

The chain is CinA-like protein from Thermotoga maritima (strain ATCC 43589 / DSM 3109 / JCM 10099 / NBRC 100826 / MSB8).